We begin with the raw amino-acid sequence, 46 residues long: L-amino-acid oxidase (46 aa).

Asparagine 31 carries N-linked (GlcNAc...) asparagine glycosylation.

Belongs to the flavin monoamine oxidase family. FIG1 subfamily. The cofactor is FAD.

The protein resides in the secreted. The protein localises to the lysosome. It is found in the cytoplasmic vesicle. Its subcellular location is the secretory vesicle. It localises to the acrosome. The catalysed reaction is an L-alpha-amino acid + O2 + H2O = a 2-oxocarboxylate + H2O2 + NH4(+). It carries out the reaction L-tryptophan + O2 + H2O = indole-3-pyruvate + H2O2 + NH4(+). The enzyme catalyses L-phenylalanine + O2 + H2O = 3-phenylpyruvate + H2O2 + NH4(+). It catalyses the reaction L-tyrosine + O2 + H2O = 3-(4-hydroxyphenyl)pyruvate + H2O2 + NH4(+). The catalysed reaction is L-arginine + O2 + H2O = 5-guanidino-2-oxopentanoate + H2O2 + NH4(+). It functions in the pathway amino-acid degradation; L-tryptophan degradation via pyruvate pathway. In terms of biological role, secreted L-amino-acid oxidase that acts as a key immunoregulator. Has preference for L-aromatic amino acids: converts phenylalanine (Phe), tyrosine (Tyr) and tryptophan (Trp) to phenylpyruvic acid (PP), hydroxyphenylpyruvic acid (HPP), and indole-3-pyruvic acid (I3P), respectively. Also has weak L-arginine oxidase activity. Acts as a negative regulator of anti-tumor immunity by mediating Trp degradation via an indole pyruvate pathway that activates the transcription factor AHR. IL4I1-mediated Trp catabolism generates I3P, giving rise to indole metabolites (indole-3-acetic acid (IAA) and indole-3-aldehyde (I3A)) and kynurenic acid, which act as ligands for AHR, a ligand-activated transcription factor that plays important roles in immunity and cancer. AHR activation by indoles following IL4I1-mediated Trp degradation enhances tumor progression by promoting cancer cell motility and suppressing adaptive immunity. Also has an immunoregulatory function in some immune cells, probably by mediating Trp degradation and promoting downstream AHR activation: inhibits T-cell activation and proliferation, promotes the differentiation of naive CD4(+) T-cells into FOXP3(+) regulatory T-cells (Treg) and regulates the development and function of B-cells. Also regulates M2 macrophage polarization by inhibiting T-cell activation. Also has antibacterial properties by inhibiting growth of Gram negative and Gram positive bacteria through the production of NH4(+) and H2O2. This Mus spretus (Western Mediterranean mouse) protein is L-amino-acid oxidase.